We begin with the raw amino-acid sequence, 592 residues long: Inactive metallocarboxypeptidase ECM14 (592 aa).

A signal peptide spans 1 to 21 (MRQFTHGTLLAILALANTISA). The propeptide occupies 22-174 (IPSFSANNYP…QTVYESYPSS (153 aa)). Over residues 170 to 179 (SYPSSSQRPT) the composition is skewed to polar residues. Positions 170–191 (SYPSSSQRPTDNGRGFLPSRES) are disordered. Residues 202–521 (DYQPLSVIGP…NAVMVLGKFL (320 aa)) enclose the Peptidase M14 domain. Residues His264 and Glu267 each coordinate Zn(2+). Residues 264–267 (HARE), Arg322, and 339–340 (DR) contribute to the substrate site. Cys333 and Cys356 are joined by a disulfide. An N-linked (GlcNAc...) asparagine glycan is attached at Asn349. A Zn(2+)-binding site is contributed by His396. Residue 397–398 (SY) coordinates substrate. Residues 542 to 592 (ADKPILDDGDDDEEEDGQDKNDDSWIPDEYKNDNDHDDDDDGWGLRRRRKR) form a disordered region. The segment covering 548-558 (DDGDDDEEEDG) has biased composition (acidic residues). The segment covering 559–575 (QDKNDDSWIPDEYKNDN) has biased composition (basic and acidic residues).

Belongs to the peptidase M14 family. Zn(2+) is required as a cofactor.

The protein localises to the vacuole. The protein resides in the secreted. Its function is as follows. Inactive carboxypeptidase that may play a role in cell wall organization and biogenesis. This chain is Inactive metallocarboxypeptidase ECM14 (ECM14), found in Blastomyces gilchristii (strain SLH14081) (Blastomyces dermatitidis).